A 758-amino-acid chain; its full sequence is Calpain (758 aa).

In terms of domain architecture, Calpain catalytic spans 99–397; the sequence is LWEDPDFPAN…FSRVEVCHLG (299 aa). Active-site residues include Cys154, His313, and Asn337. The interval 398 to 562 is domain III; that stretch reads LESLEYNQNF…TSITEQELDE (165 aa). Residues 563 to 582 form a linker region; that stretch reads DNTNQGLPDDVIEALKLEDT. The domain IV stretch occupies residues 583 to 757; it reads LLDEDQEIEQ…AEDYLRFSVY (175 aa). Asp641, Asn643, Thr645, His647, Glu652, Asp671, Asp673, Ser675, Tyr677, and Glu682 together coordinate Ca(2+). 2 consecutive EF-hand domains span residues 658–693 and 694–729; these read IQAKGWKHIFIKHDVDQSGYFSAYEFREALNDAGYH and VSNRLINAIINRYQDPGTDKISFEDFMLCMVRLKTA.

This sequence belongs to the peptidase C2 family.

Its activity is regulated as follows. Activated by free cytoplasmic calcium. Functionally, calpains are calcium-activated non-lysosomal thiol-proteases. This chain is Calpain, found in Schistosoma mansoni (Blood fluke).